The chain runs to 460 residues: A-type ATP synthase subunit B 1 (460 aa).

Belongs to the ATPase alpha/beta chains family. In terms of assembly, has multiple subunits with at least A(3), B(3), C, D, E, F, H, I and proteolipid K(x).

Its subcellular location is the cell membrane. Its function is as follows. Component of the A-type ATP synthase that produces ATP from ADP in the presence of a proton gradient across the membrane. The B chain is a regulatory subunit. In Methanospirillum hungatei JF-1 (strain ATCC 27890 / DSM 864 / NBRC 100397 / JF-1), this protein is A-type ATP synthase subunit B 1.